A 357-amino-acid chain; its full sequence is Hyaluronidase (357 aa).

The first 26 residues, 1-26, serve as a signal peptide directing secretion; it reads MLLVTLFLFFLQALVNGDSCGSNCEK. Intrachain disulfides connect cysteine 45/cysteine 334 and cysteine 211/cysteine 223. 2 N-linked (GlcNAc...) asparagine glycosylation sites follow: asparagine 105 and asparagine 125. The active-site Proton donor is glutamate 135. Residue asparagine 153 is glycosylated (N-linked (GlcNAc...) asparagine). N-linked (GlcNAc...) asparagine glycosylation occurs at asparagine 351.

This sequence belongs to the glycosyl hydrolase 56 family.

It is found in the secreted. The catalysed reaction is Random hydrolysis of (1-&gt;4)-linkages between N-acetyl-beta-D-glucosamine and D-glucuronate residues in hyaluronate.. Its function is as follows. Hydrolyzes high molecular weight hyaluronic acid to produce small oligosaccharides. This chain is Hyaluronidase, found in Vespa magnifica (Hornet).